Here is a 330-residue protein sequence, read N- to C-terminus: Aspartate--ammonia ligase (330 aa).

This sequence belongs to the class-II aminoacyl-tRNA synthetase family. AsnA subfamily.

Its subcellular location is the cytoplasm. The enzyme catalyses L-aspartate + NH4(+) + ATP = L-asparagine + AMP + diphosphate + H(+). It participates in amino-acid biosynthesis; L-asparagine biosynthesis; L-asparagine from L-aspartate (ammonia route): step 1/1. The sequence is that of Aspartate--ammonia ligase from Aeromonas salmonicida (strain A449).